The chain runs to 1195 residues: Protein PIP82 (1195 aa).

Positions 1 to 10 (MSHQEQQFQH) are enriched in low complexity. 9 disordered regions span residues 1–55 (MSHQ…IGSS), 85–132 (KLRG…SQQF), 291–471 (NTFD…TANL), 493–515 (KVAK…GASG), 544–567 (QRNA…GHEP), 613–637 (EEDN…GIAT), 702–771 (MSPV…IVPK), 833–977 (SAGS…VKTS), and 1060–1195 (QITV…VVEI). The span at 11–26 (YPHHQHHHHHHHHHIH) shows a compositional bias: basic residues. Residues 37–50 (RSSDLEPNRSRNTD) are compositionally biased toward basic and acidic residues. The span at 109 to 118 (GSAKDGAGAA) shows a compositional bias: low complexity. A compositionally biased stretch (polar residues) spans 119 to 132 (QQTHLQVAGQSQQF). A compositionally biased stretch (basic and acidic residues) spans 300-313 (HEQFERGKISHETD). The segment covering 351-360 (QQAAAEESPQ) has biased composition (low complexity). A compositionally biased stretch (pro residues) spans 361–371 (ANPPPPPPPRP). The interval 400 to 450 (ETTKTAENADENNASRKLSIRQNIKRLRKSIKRPSKIKSKAAAPVPDSDEE) is phospho-regulated basic and hydrophobic (PRBH) motif. The span at 422–438 (NIKRLRKSIKRPSKIKS) shows a compositional bias: basic residues. Positions 494–505 (VAKEPEELETKA) are enriched in basic and acidic residues. A compositionally biased stretch (polar residues) spans 545–560 (RNANNQNATTSKQPKP). Composition is skewed to polar residues over residues 732-742 (SGPQKSMSYSP) and 856-867 (RVQSPQIGNSRE). The span at 872–891 (QEEEDKEAERDSEEEEEERD) shows a compositional bias: acidic residues. 2 stretches are compositionally biased toward pro residues: residues 898-910 (SESP…PQRR) and 925-939 (VPPP…PPPS). A compositionally biased stretch (low complexity) spans 940–968 (VETIPSVASLPSPAPVTRSMAQRSASMSR). Residues 1075-1085 (QSDQSDQSAHQ) are compositionally biased toward polar residues. The segment covering 1086 to 1095 (EITDTRKTKS) has biased composition (basic and acidic residues). The span at 1102–1111 (RQNSNCSRSE) shows a compositional bias: polar residues. 2 stretches are compositionally biased toward low complexity: residues 1114–1149 (SPLS…QNPS) and 1179–1195 (SYYS…VVEI).

Phosphorylated by aPKC which lowers lipid affinity and promotes dissociation from the cell cortex. In the photoreceptor cells, aPKC-mediated phosphorylation leads to its displacement from the stalk apical cortex and thus restricts its localization to the rhabdomeric apical cortex where it functions. Dephosphorylation appears to be light-dependent. As to expression, restricted to photoreceptor cells (at protein level). Not detected until approximately 48hrs after puparium formation (APF) and then maintained in the photoreceptor cells post-eclosion (at protein level).

It localises to the cytoplasm. The protein resides in the cell cortex. The protein localises to the cytosol. It is found in the cell projection. Its subcellular location is the rhabdomere. Required for the morphological differentiation and maintenance of the rhabdomeric photoreceptor apical domain. Acts as a downstream component of the gl and Pph13 transcriptional pathway which is required for photoreceptor cell development. Likely to function by regulating the trafficking or retention of rhabdomeric proteins including the phototransduction proteins ninaE and didum. The sequence is that of Protein PIP82 from Drosophila melanogaster (Fruit fly).